Reading from the N-terminus, the 444-residue chain is Ribosomal protein uS12 methylthiotransferase RimO (444 aa).

Positions 6 to 116 constitute an MTTase N-terminal domain; it reads PNIGFVSLGC…VMEHVHKYVP (111 aa). 6 residues coordinate [4Fe-4S] cluster: Cys-15, Cys-51, Cys-80, Cys-148, Cys-152, and Cys-155. The region spanning 134–375 is the Radical SAM core domain; sequence LTPKHYAYLK…MQLQQEISAA (242 aa). The region spanning 378-444 is the TRAM domain; the sequence is QQKIGKTWKV…ADEYDLWGTC (67 aa).

This sequence belongs to the methylthiotransferase family. RimO subfamily. The cofactor is [4Fe-4S] cluster.

It localises to the cytoplasm. The catalysed reaction is L-aspartate(89)-[ribosomal protein uS12]-hydrogen + (sulfur carrier)-SH + AH2 + 2 S-adenosyl-L-methionine = 3-methylsulfanyl-L-aspartate(89)-[ribosomal protein uS12]-hydrogen + (sulfur carrier)-H + 5'-deoxyadenosine + L-methionine + A + S-adenosyl-L-homocysteine + 2 H(+). Its function is as follows. Catalyzes the methylthiolation of an aspartic acid residue of ribosomal protein uS12. In Actinobacillus succinogenes (strain ATCC 55618 / DSM 22257 / CCUG 43843 / 130Z), this protein is Ribosomal protein uS12 methylthiotransferase RimO.